The following is a 110-amino-acid chain: U1-lycotoxin-Ls1dd (110 aa).

Residues 1 to 20 (MKFVLLFGVLLVTLFSYSSA) form the signal peptide. Residues 21–44 (EMLDDFDQADEDELLSLIEKEEAR) constitute a propeptide that is removed on maturation. Disulfide bonds link Cys47–Cys62, Cys54–Cys71, Cys61–Cys89, and Cys73–Cys87.

This sequence belongs to the neurotoxin 19 (CSTX) family. 03 subfamily. Expressed by the venom gland.

It is found in the secreted. The chain is U1-lycotoxin-Ls1dd from Lycosa singoriensis (Wolf spider).